The following is a 424-amino-acid chain: Histidine--tRNA ligase (424 aa).

This sequence belongs to the class-II aminoacyl-tRNA synthetase family. As to quaternary structure, homodimer.

It localises to the cytoplasm. The enzyme catalyses tRNA(His) + L-histidine + ATP = L-histidyl-tRNA(His) + AMP + diphosphate + H(+). This is Histidine--tRNA ligase from Pediococcus pentosaceus (strain ATCC 25745 / CCUG 21536 / LMG 10740 / 183-1w).